Reading from the N-terminus, the 741-residue chain is Pentatricopeptide repeat-containing protein At1g08070, chloroplastic (741 aa).

PPR repeat units follow at residues 98–132 (NLLI…GLLP), 133–167 (NSYT…GCDL), 168–202 (DLYV…DVVS), 203–229 (YTAL…IPVK), 230–264 (DVVS…NVRP), 265–299 (DEST…GFGS), 300–330 (NLKI…LPYK), 331–365 (DVIS…GETP), 366–396 (NDVT…IDKR), 403–433 (ASSL…ILHK), 434–468 (SLSS…GIQP), 469–499 (DDIT…MTQD), and 505–535 (KLEH…MEME). The segment at 540-615 (IWCSLLKACK…VPGCSSIEID (76 aa)) is type E motif. The type E(+) motif stretch occupies residues 616–646 (SVVHEFIIGDKFHPRNREIYGMLEEMEVLLE). A type DYW motif region spans residues 647–741 (KAGFVPDTSE…DGVCSCNDYW (95 aa)).

The protein belongs to the PPR family. PCMP-H subfamily. As to quaternary structure, interacts with ORRM1. Interacts with VAR3/OZ1.

The protein resides in the plastid. It localises to the chloroplast. Functionally, involved in multiple sites RNA editing events in chloroplasts. Involved in the editing of the site 9 of ndhB (ndhB-9) and site 1 of ndhG (ndhG-1) transcripts, which are two plastid-encoded subunits of the chloroplast NAD(P)H dehydrogenase (NDH) complex. Not essential for the activity of the NDH complex of the photosynthetic electron transport chain. In Arabidopsis thaliana (Mouse-ear cress), this protein is Pentatricopeptide repeat-containing protein At1g08070, chloroplastic (PCMP-H12).